Here is a 271-residue protein sequence, read N- to C-terminus: Murein DD-endopeptidase MepH (271 aa).

Residues 1 to 27 (MARINRISITLCALLFTTLPLTPMAHA) form the signal peptide. Positions 27-102 (ASKQARESSA…KHAVNKTASA (76 aa)) are disordered. The segment covering 55–64 (KTQKTAKKAA) has biased composition (basic residues). Over residues 65-86 (SKSTTKSKTASSVKKSSITASK) the composition is skewed to low complexity. In terms of domain architecture, NlpC/P60 spans 138–265 (QKATKVAMNK…RHYVGARRVM (128 aa)). Cys-169 functions as the Nucleophile in the catalytic mechanism. The active-site Proton acceptor is His-224. Gln-236 is a catalytic residue.

It belongs to the peptidase C40 family.

It functions in the pathway cell wall biogenesis; cell wall polysaccharide biosynthesis. Functionally, a murein DD-endopeptidase with specificity for D-Ala-meso-diaminopimelic acid (mDAP) cross-links. Its role is probably to cleave D-Ala-mDAP cross-links to allow insertion of new glycans and thus cell wall expansion. Functionally redundant with MepM and MepH. Partially suppresses an mepS disruption mutant. The polypeptide is Murein DD-endopeptidase MepH (mepH) (Escherichia coli (strain K12)).